Reading from the N-terminus, the 297-residue chain is tRNA dimethylallyltransferase (297 aa).

15–22 (GPTASGKS) contacts ATP. 17–22 (TASGKS) provides a ligand contact to substrate. 2 interaction with substrate tRNA regions span residues 40-43 (DSMQ) and 164-168 (QRIVR).

The protein belongs to the IPP transferase family. As to quaternary structure, monomer. Mg(2+) serves as cofactor.

The enzyme catalyses adenosine(37) in tRNA + dimethylallyl diphosphate = N(6)-dimethylallyladenosine(37) in tRNA + diphosphate. Functionally, catalyzes the transfer of a dimethylallyl group onto the adenine at position 37 in tRNAs that read codons beginning with uridine, leading to the formation of N6-(dimethylallyl)adenosine (i(6)A). The protein is tRNA dimethylallyltransferase of Rhizobium leguminosarum bv. trifolii (strain WSM2304).